The following is a 535-amino-acid chain: High affinity immunoglobulin alpha and immunoglobulin mu Fc receptor (535 aa).

An N-terminal signal peptide occupies residues Met1–Ser35. The Extracellular portion of the chain corresponds to Met36 to Arg455. Residues Gly95 to Trp117 form a mediates immunoglobulin Fc fragment-binding region. The 95-residue stretch at Gly95–Thr189 folds into the Ig-like V-type domain. A disulfide bridge connects residues Cys102 and Cys173. An N-linked (GlcNAc...) asparagine glycan is attached at Asn187. 2 disordered regions span residues Ala201–Glu360 and Glu405–Val430. 2 stretches are compositionally biased toward low complexity: residues Pro208–Gly220 and Thr241–Ser253. The span at Lys291–Glu328 shows a compositional bias: polar residues. The span at Asp330–Arg346 shows a compositional bias: basic and acidic residues. Residues Leu413–Ser429 are compositionally biased toward polar residues. The helical transmembrane segment at Ile456–Lys476 threads the bilayer. At Arg477–Pro535 the chain is on the cytoplasmic side. A disordered region spans residues Leu507–Pro535. A compositionally biased stretch (polar residues) spans Asn513–Val528.

As to quaternary structure, interacts with IGHM; this interaction facilitates the endocytosis of IgM-coated microbes and IgM-antigen immune complexes. N-glycosylated. As to expression, expressed in several tissues including thymus, spleen, liver, kidney, small and large intestine, testis and placenta. Expressed by oligodendrocytes, B-cells and macrophages but not granulocytes, T-cells or NK cells (at protein level).

The protein resides in the cell membrane. In terms of biological role, functions as a receptor for the Fc fragment of IgA and IgM. Binds IgA and IgM with high affinity and mediates their endocytosis. May function in the immune response to microbes mediated by IgA and IgM. This is High affinity immunoglobulin alpha and immunoglobulin mu Fc receptor (Fcamr) from Mus musculus (Mouse).